Consider the following 520-residue polypeptide: tRNA (guanine-N(7)-)-methyltransferase non-catalytic subunit TRM82 (520 aa).

The segment at 51 to 102 is disordered; sequence PLDSEISPDRASSAGTCAEPPEKRRKLTPPVDESGEAQTEQSAKAKARKSQT. WD repeat units lie at residues 105–145, 244–291, and 296–338; these read QAWS…KLTQ, GHVS…HIIH, and GHTS…QTIP.

Belongs to the WD repeat TRM82 family. As to quaternary structure, forms a heterodimer with the catalytic subunit TRM8.

The protein localises to the nucleus. Its pathway is tRNA modification; N(7)-methylguanine-tRNA biosynthesis. Its function is as follows. Required for the formation of N(7)-methylguanine at position 46 (m7G46) in tRNA. In the complex, it is required to stabilize and induce conformational changes of the catalytic subunit. The chain is tRNA (guanine-N(7)-)-methyltransferase non-catalytic subunit TRM82 from Coccidioides immitis (strain RS) (Valley fever fungus).